The following is a 206-amino-acid chain: CASP-like protein 2C1 (206 aa).

Residues 1 to 31 (MSVLGVGPRTVTPHLRKGMMESSSGISLARA) lie on the Cytoplasmic side of the membrane. A helical membrane pass occupies residues 32–52 (EAFLRLFAILVLVLTACLLGF). Over 53–71 (DTQTKLLFSTIKKTATFRD) the chain is Extracellular. A helical transmembrane segment spans residues 72–92 (LGALQVVVYVDSVAAGYNLLQ). Over 93–111 (LGRGFISAKLKGKLINVSY) the chain is Cytoplasmic. Residues 112–132 (VTLPWVCFLLDQAAVYTVFSA) form a helical membrane-spanning segment. Residues 133–161 (NTAALQASIIAVTGESSLQWMKVCNRYTR) lie on the Extracellular side of the membrane. The chain crosses the membrane as a helical span at residues 162 to 182 (FCIQVGGALLSGYLASLLMVL). Residues 183-206 (LSSLSAFSLFRLYSPKQFHLLKPT) lie on the Cytoplasmic side of the membrane.

The protein belongs to the Casparian strip membrane proteins (CASP) family. Homodimer and heterodimers.

The protein localises to the cell membrane. The sequence is that of CASP-like protein 2C1 from Vitis vinifera (Grape).